The primary structure comprises 246 residues: Bidirectional sugar transporter SWEET3a (246 aa).

The Extracellular portion of the chain corresponds to 1–6; sequence MFPDIR. Residues 7-27 form a helical membrane-spanning segment; sequence FIVGIIGSVACMLLYSAPILT. One can recognise a MtN3/slv 1 domain in the interval 7–96; it reads FIVGIIGSVA…ISIYVWFAPR (90 aa). The Cytoplasmic segment spans residues 28–42; that stretch reads FKRVIKKASVEEFSC. A helical membrane pass occupies residues 43-63; it reads IPYILALFSCLTYSWYGFPVV. Residues 64 to 74 lie on the Extracellular side of the membrane; the sequence is SYGWENMTVCS. N69 carries an N-linked (GlcNAc...) asparagine glycan. The helical transmembrane segment at 75–95 threads the bilayer; that stretch reads ISSLGVLFEGTFISIYVWFAP. The Cytoplasmic segment spans residues 96–101; sequence RGKKKQ. Residues 102 to 122 form a helical membrane-spanning segment; sequence VMLMASLILAVFCMTVFFSSF. The Extracellular portion of the chain corresponds to 123-131; the sequence is SIHNHHIRK. Residues 132-152 form a helical membrane-spanning segment; the sequence is VFVGSVGLVSSISMYGSPLVA. The region spanning 133 to 217 is the MtN3/slv 2 domain; that stretch reads FVGSVGLVSS…VVYCIYSKCK (85 aa). At 153 to 166 the chain is on the cytoplasmic side; it reads MKQVIRTKSVEFMP. The helical transmembrane segment at 167-187 threads the bilayer; that stretch reads FYLSLFTLFTSLTWMAYGVIG. Residues 188-191 lie on the Extracellular side of the membrane; it reads RDPF. A helical transmembrane segment spans residues 192-212; it reads IATPNCIGSIMGILQLVVYCI. Residues 213 to 246 lie on the Cytoplasmic side of the membrane; it reads YSKCKEAPKVLHDIEQANVVKIPTSHVDTKGHNP.

This sequence belongs to the SWEET sugar transporter family. In terms of assembly, forms homooligomers and/or heterooligomers.

The protein localises to the cell membrane. Its function is as follows. Mediates both low-affinity uptake and efflux of sugar across the plasma membrane. In Oryza sativa subsp. japonica (Rice), this protein is Bidirectional sugar transporter SWEET3a (SWEET3A).